We begin with the raw amino-acid sequence, 165 residues long: Large ribosomal subunit protein uL10 (165 aa).

It belongs to the universal ribosomal protein uL10 family. In terms of assembly, part of the ribosomal stalk of the 50S ribosomal subunit. The N-terminus interacts with L11 and the large rRNA to form the base of the stalk. The C-terminus forms an elongated spine to which L12 dimers bind in a sequential fashion forming a multimeric L10(L12)X complex.

Functionally, forms part of the ribosomal stalk, playing a central role in the interaction of the ribosome with GTP-bound translation factors. The sequence is that of Large ribosomal subunit protein uL10 from Burkholderia lata (strain ATCC 17760 / DSM 23089 / LMG 22485 / NCIMB 9086 / R18194 / 383).